An 839-amino-acid polypeptide reads, in one-letter code: Probable beta-glucosidase I (839 aa).

An N-linked (GlcNAc...) asparagine glycan is attached at asparagine 197. Aspartate 225 is an active-site residue. The PA14 domain occupies 395–555; sequence DGKTGFSFKV…GQEELISNAV (161 aa). N-linked (GlcNAc...) asparagine glycosylation is present at asparagine 620.

The protein belongs to the glycosyl hydrolase 3 family.

The protein localises to the secreted. The enzyme catalyses Hydrolysis of terminal, non-reducing beta-D-glucosyl residues with release of beta-D-glucose.. Its pathway is glycan metabolism; cellulose degradation. Beta-glucosidases are one of a number of cellulolytic enzymes involved in the degradation of cellulosic biomass. Catalyzes the last step releasing glucose from the inhibitory cellobiose. The sequence is that of Probable beta-glucosidase I (bglI) from Aspergillus flavus (strain ATCC 200026 / FGSC A1120 / IAM 13836 / NRRL 3357 / JCM 12722 / SRRC 167).